The primary structure comprises 38 residues: Small ribosomal subunit protein eS32 (38 aa).

This sequence belongs to the eukaryotic ribosomal protein eS32 family. Component of the small ribosomal subunit (SSU).

In Methanocaldococcus jannaschii (strain ATCC 43067 / DSM 2661 / JAL-1 / JCM 10045 / NBRC 100440) (Methanococcus jannaschii), this protein is Small ribosomal subunit protein eS32 (rpl41e).